Here is a 655-residue protein sequence, read N- to C-terminus: Tumor necrosis factor receptor superfamily member 21 (655 aa).

The first 41 residues, 1 to 41 (MGTRASSITALASCSRTAGQVGATMVAGSLLLLGFLSTITA), serve as a signal peptide directing secretion. Residues 42 to 349 (QPEQKTLSLP…AHKHFDINEH (308 aa)) are Extracellular-facing. TNFR-Cys repeat units follow at residues 50-88 (LPGT…LRVC), 90-131 (SCPA…DREC), 133-167 (CPPG…EDVR), and 170-211 (QCAR…DNVC). Disulfide bonds link C67-C80, C70-C88, C91-C106, C109-C123, C113-C131, C133-C144, C150-C168, C171-C186, and C192-C211. N82 is a glycosylation site (N-linked (GlcNAc...) asparagine). An N-linked (GlcNAc...) asparagine glycan is attached at N141. Disordered regions lie at residues 222–305 (PPSS…QAPH) and 318–339 (EATG…PRQN). Polar residues-rich tracts occupy residues 241-262 (VPSS…TASV) and 276-302 (PDNT…THQQ). N-linked (GlcNAc...) asparagine glycosylation is found at N252, N257, N278, and N289. The span at 330–339 (APKRGHPRQN) shows a compositional bias: basic residues. Residues 350–370 (LPWMIVLFLLLVLVLIVVCSI) traverse the membrane as a helical segment. C368 is lipidated: S-palmitoyl cysteine. The Cytoplasmic segment spans residues 371–655 (RKSSRTLKKG…SVYSHLPDLL (285 aa)). In terms of domain architecture, Death spans 415–498 (GIDILKLVAA…DVVEKIRGLM (84 aa)).

In terms of assembly, associates with TRADD. Interacts with NGFR. Interacts with CASP8. Post-translationally, oxidized in response to reactive oxygen species (ROS), leading to endocytosis. In terms of tissue distribution, detected in spleen B-cells (at protein level). Ubiquitous. Highly expressed in adult spleen, thymus, testis, prostate, ovary, small intestine, colon, brain, lung and kidney, and in fetal brain, liver and lung. Detected at lower levels in adult peripheral blood leukocytes, lung, and in fetal muscle, heart, kidney, small intestine and skin. Detected in T-cells, B-cells and monocytes. In T-cells expression is highest in Th0 cells, intermediate in Th2 cells and lower in Th1 cells. Expressed at low levels in proliferating progenitors in the spinal cord, but is highly expressed by differentiating neurons within the spinal cord and adjacent dorsal root ganglia.

Its subcellular location is the cell membrane. In terms of biological role, promotes apoptosis, possibly via a pathway that involves the activation of NF-kappa-B. Can also promote apoptosis mediated by BAX and by the release of cytochrome c from the mitochondria into the cytoplasm. Trophic-factor deprivation triggers the cleavage of surface APP by beta-secretase to release sAPP-beta which is further cleaved to release an N-terminal fragment of APP (N-APP). Negatively regulates oligodendrocyte survival, maturation and myelination. Plays a role in signaling cascades triggered by stimulation of T-cell receptors, in the adaptive immune response and in the regulation of T-cell differentiation and proliferation. Negatively regulates T-cell responses and the release of cytokines such as IL4, IL5, IL10, IL13 and IFNG by Th2 cells. Negatively regulates the production of IgG, IgM and IgM in response to antigens. May inhibit the activation of JNK in response to T-cell stimulation. Also acts as a regulator of pyroptosis: recruits CASP8 in response to reactive oxygen species (ROS) and subsequent oxidation, leading to activation of GSDMC. The sequence is that of Tumor necrosis factor receptor superfamily member 21 (Tnfrsf21) from Mus musculus (Mouse).